The chain runs to 755 residues: SWI/SNF-related matrix-associated actin-dependent regulator of chromatin subfamily A-like protein 1 (755 aa).

Residues 7–27 are a coiled coil; it reads SEIAEKKRIALAKLQAKKSQL. 2 disordered regions span residues 26–91 and 104–134; these read QLLA…NKSS and SNRE…SLSS. The span at 32–63 shows a compositional bias: polar residues; that stretch reads PATNGKSTTSATGATQHANNGKSNPNQPQAKS. Residue Ser63 is modified to Phosphoserine. The HARP domain occupies 139-217; it reads PVAVLLGNSI…KPYVHMNGIP (79 aa). The Helicase ATP-binding domain occupies 256–412; sequence CFAIAQKGRI…FTQLQMIDGK (157 aa). Residue 269 to 276 coordinates ATP; the sequence is DEMGLGKT. Positions 361-364 match the DESH box motif; the sequence is DESH. Positions 527–681 constitute a Helicase C-terminal domain; it reads YLKTLVKEQK…NLQKATHTAA (155 aa).

The protein belongs to the SNF2/RAD54 helicase family. SMARCAL1 subfamily.

The protein resides in the nucleus. ATP-dependent annealing helicase that catalyzes the rewinding of the stably unwound DNA. This Drosophila melanogaster (Fruit fly) protein is SWI/SNF-related matrix-associated actin-dependent regulator of chromatin subfamily A-like protein 1 (Marcal1).